A 147-amino-acid chain; its full sequence is Cyanate hydratase (147 aa).

Residues Arg88, Glu91, and Ser114 contribute to the active site.

This sequence belongs to the cyanase family.

The catalysed reaction is cyanate + hydrogencarbonate + 3 H(+) = NH4(+) + 2 CO2. Catalyzes the reaction of cyanate with bicarbonate to produce ammonia and carbon dioxide. The protein is Cyanate hydratase of Prochlorococcus marinus subsp. pastoris (strain CCMP1986 / NIES-2087 / MED4).